The chain runs to 543 residues: Myotubularin-related protein 9-like (543 aa).

Positions 124 to 502 constitute a Myotubularin phosphatase domain; that stretch reads AWHFHPPECY…QSLRLWQGLF (379 aa).

It belongs to the protein-tyrosine phosphatase family. Non-receptor class myotubularin subfamily.

Probable pseudophosphatase. This is Myotubularin-related protein 9-like from Bos taurus (Bovine).